Here is a 235-residue protein sequence, read N- to C-terminus: High affinity immunoglobulin epsilon receptor subunit beta (235 aa).

Residues 1 to 23 are disordered; sequence MDTENRSRADLALPNPQESSSAP. Topologically, residues 1–51 are cytoplasmic; that stretch reads MDTENRSRADLALPNPQESSSAPDIELLEASPAKAAPPKQTWRTFLKKELE. Residues 52–71 form a helical membrane-spanning segment; the sequence is FLGATQILVGLICLCFGTIV. Over 72 to 89 the chain is Extracellular; that stretch reads CSVLYVSDFDEEVLLLYK. The chain crosses the membrane as a helical span at residues 90-109; it reads LGYPFWGAVLFVLSGFLSII. At 110-122 the chain is on the cytoplasmic side; it reads SERKNTLYLVRGS. The chain crosses the membrane as a helical span at residues 123–142; it reads LGANIVSSIAAGTGIAMLIL. Residues 143 to 171 lie on the Extracellular side of the membrane; that stretch reads NLTNNFAYMNNCKNVTEDDGCFVASFTTE. The chain crosses the membrane as a helical span at residues 172 to 191; sequence LVLMMLFLTILAFCSAVLFT. At 192–235 the chain is on the cytoplasmic side; that stretch reads IYRIGQELESKKVPDDRLYEELNVYSPIYSELEDKGETSSPVDS. Phosphotyrosine occurs at positions 210 and 216. Ser-217 is modified (phosphoserine). Tyr-220 carries the phosphotyrosine modification.

Belongs to the MS4A family. In terms of assembly, tetramer of an alpha chain, a beta chain, and two disulfide linked gamma chains. Binds LILRB1. Interacts with FGR. Interacts with FGR and FES/FPS. Interacts with LYN. Post-translationally, phosphorylated on tyrosine residues by LYN.

Its subcellular location is the membrane. Functionally, high affinity receptor that binds to the Fc region of immunoglobulins epsilon. Aggregation of FCER1 by multivalent antigens is required for the full mast cell response, including the release of preformed mediators (such as histamine) by degranulation and de novo production of lipid mediators and cytokines. Also mediates the secretion of important lymphokines. Binding of allergen to receptor-bound IgE leads to cell activation and the release of mediators responsible for the manifestations of allergy. The sequence is that of High affinity immunoglobulin epsilon receptor subunit beta (Ms4a2) from Mus musculus (Mouse).